A 546-amino-acid polypeptide reads, in one-letter code: uncharacterized protein (546 aa).

The region spanning Ser52 to Asn123 is the SLH domain.

It belongs to the OprB family.

This is an uncharacterized protein from Synechocystis sp. (strain ATCC 27184 / PCC 6803 / Kazusa).